The following is a 717-amino-acid chain: MESTSAFNLQMRPDNVAVVTIDVPGEKMNTLKAEFARDVRAIVKTLRENRDLAGVVFISAKPDNFIAGADINMIAHCQSAQEAEALASQGQQIMAEIRALPVHVVAAIHGACLGGGLELALACHSRICTDDVKTLLGLPEVQLGLLPGSGGTQRLPRLVGVSTALEMILAGKQLRPRQALKAGLVDDVVPQSILLEAAAELAKKRRPAPRRLPVRERLLAGPIGRALLFRMVTQKTHQKTHGNYPAAQRIIDVVRTGLEQGSASGYQAEARAFGELAMTPESAALRGLFFATTELKKETGSEAAPRALHSVGVLGGGLMGGGIAYVTATKARLPVRIKDISEKGINHALKYSWDLLEKKVRRRHLRASERDAQMALISASTDYRGFHQRDIVVEAVFEDLTLKQNMVAEIEAHTAPHTIFASNTSSLPIGDIAAGATRPEQVIGLHYFSPVDKMPLVEVIPHAGTSAETIATTVQLAKKQGKTPIVVADCAGFYVNRILAPYINEAMRCLMEGESIEKIDEALVKRGFPVGPIQLLDEVGIDVGTKIMPVLERAYGPRFSAPGDAVAAILNDDRKGRKNGRGFYLYPAKGRKSKKQVDPAVYGLIGVKPGGKLSGEEIAERCVMMMLNEAARCLDEGVVRSARDGDIGAVFGIGFPPFLGGPFRYMDTLGAAAMATTLTRLATRYGDRFTPCDRLLRMAQTGQTFWLAGNLQAEMTV.

Residues 1–190 (MESTSAFNLQ…KAGLVDDVVP (190 aa)) form an enoyl-CoA hydratase region. The tract at residues 306-717 (RALHSVGVLG…AGNLQAEMTV (412 aa)) is 3-hydroxyacyl-CoA dehydrogenase.

It in the N-terminal section; belongs to the enoyl-CoA hydratase/isomerase family. The protein in the central section; belongs to the 3-hydroxyacyl-CoA dehydrogenase family. Heterotetramer of two alpha chains (FadJ) and two beta chains (FadI).

The protein localises to the cytoplasm. It carries out the reaction a (3S)-3-hydroxyacyl-CoA = a (2E)-enoyl-CoA + H2O. The enzyme catalyses a 4-saturated-(3S)-3-hydroxyacyl-CoA = a (3E)-enoyl-CoA + H2O. The catalysed reaction is a (3S)-3-hydroxyacyl-CoA + NAD(+) = a 3-oxoacyl-CoA + NADH + H(+). It catalyses the reaction (3S)-3-hydroxybutanoyl-CoA = (3R)-3-hydroxybutanoyl-CoA. The protein operates within lipid metabolism; fatty acid beta-oxidation. Catalyzes the formation of a hydroxyacyl-CoA by addition of water on enoyl-CoA. Also exhibits 3-hydroxyacyl-CoA epimerase and 3-hydroxyacyl-CoA dehydrogenase activities. In Cronobacter sakazakii (strain ATCC BAA-894) (Enterobacter sakazakii), this protein is Fatty acid oxidation complex subunit alpha.